Here is a 418-residue protein sequence, read N- to C-terminus: tRNA wybutosine-synthesizing protein 2 (418 aa).

S-adenosyl-L-methionine-binding positions include S228, K235, 275 to 276, and 302 to 303; these read EI and EN.

Belongs to the class I-like SAM-binding methyltransferase superfamily. TRM5/TYW2 family.

The protein resides in the cytoplasm. It localises to the nucleus. The enzyme catalyses 4-demethylwyosine(37) in tRNA(Phe) + S-adenosyl-L-methionine = 4-demethyl-7-[(3S)-3-amino-3-carboxypropyl]wyosine(37) in tRNA(Phe) + S-methyl-5'-thioadenosine + H(+). It participates in tRNA modification; wybutosine-tRNA(Phe) biosynthesis. In terms of biological role, S-adenosyl-L-methionine-dependent transferase that acts as a component of the wybutosine biosynthesis pathway. Wybutosine is a hyper modified guanosine with a tricyclic base found at the 3'-position adjacent to the anticodon of eukaryotic phenylalanine tRNA. Catalyzes the transfer of the alpha-amino-alpha-carboxypropyl (acp) group from S-adenosyl-L-methionine to the C-7 position of 4-demethylwyosine (imG-14) to produce wybutosine-86. This Schizosaccharomyces pombe (strain 972 / ATCC 24843) (Fission yeast) protein is tRNA wybutosine-synthesizing protein 2 (trm12).